The primary structure comprises 262 residues: Carbohydrate deacetylase (262 aa).

Residue His129 coordinates Mg(2+).

The protein belongs to the YdjC deacetylase family. As to quaternary structure, homodimer. It depends on Mg(2+) as a cofactor.

Functionally, probably catalyzes the deacetylation of acetylated carbohydrates an important step in the degradation of oligosaccharides. In Enterococcus faecalis (strain ATCC 700802 / V583), this protein is Carbohydrate deacetylase.